Here is a 294-residue protein sequence, read N- to C-terminus: 4-hydroxy-tetrahydrodipicolinate synthase (294 aa).

Thr45 provides a ligand contact to pyruvate. The Proton donor/acceptor role is filled by Tyr133. The Schiff-base intermediate with substrate role is filled by Lys161. Ile203 is a pyruvate binding site.

The protein belongs to the DapA family. As to quaternary structure, homotetramer; dimer of dimers.

Its subcellular location is the cytoplasm. The catalysed reaction is L-aspartate 4-semialdehyde + pyruvate = (2S,4S)-4-hydroxy-2,3,4,5-tetrahydrodipicolinate + H2O + H(+). It functions in the pathway amino-acid biosynthesis; L-lysine biosynthesis via DAP pathway; (S)-tetrahydrodipicolinate from L-aspartate: step 3/4. Functionally, catalyzes the condensation of (S)-aspartate-beta-semialdehyde [(S)-ASA] and pyruvate to 4-hydroxy-tetrahydrodipicolinate (HTPA). This chain is 4-hydroxy-tetrahydrodipicolinate synthase, found in Thioalkalivibrio sulfidiphilus (strain HL-EbGR7).